The following is a 202-amino-acid chain: Cutinase (202 aa).

The first 20 residues, 1–20 (MKTSAQQLLSALLLPLSVLA), serve as a signal peptide directing secretion. An intrachain disulfide couples Cys31 to Cys106. Catalysis depends on Ser117, which acts as the Nucleophile. Cys165 and Cys172 are joined by a disulfide. The active site involves Asp169. His182 functions as the Proton donor/acceptor in the catalytic mechanism.

This sequence belongs to the cutinase family. Post-translationally, the 2 disulfide bonds play a critical role in holding the catalytic residues in juxta-position; reduction of the disulfide bridges results in the complete inactivation of the enzyme.

The protein localises to the secreted. The catalysed reaction is cutin + H2O = cutin monomers.. Functionally, catalyzes the hydrolysis of complex carboxylic polyesters found in the cell wall of plants. Degrades cutin, a macromolecule that forms the structure of the plant cuticle. Allows pathogenic fungi to penetrate through the cuticular barrier into the host plant during the initial stage of fungal infection. The polypeptide is Cutinase (Botryotinia fuckeliana (Noble rot fungus)).